A 497-amino-acid chain; its full sequence is Probable zinc metalloprotease TRV_03476 (497 aa).

Residues 1 to 24 (MRFLISSLLSGLALLTSLHAFVLA) form the signal peptide. Asn100 and Asn121 each carry an N-linked (GlcNAc...) asparagine glycan. Zn(2+) is bound by residues His171, Asp191, and Glu227. An N-linked (GlcNAc...) asparagine glycan is attached at Asn242. Asp254 is a binding site for Zn(2+). The Fibronectin type-III domain maps to 411–497 (MPRNVRVNTN…ERGVAVLPFP (87 aa)). Asn424 carries an N-linked (GlcNAc...) asparagine glycan.

It belongs to the peptidase M28 family. M28B subfamily. It depends on Zn(2+) as a cofactor.

The protein localises to the secreted. The sequence is that of Probable zinc metalloprotease TRV_03476 from Trichophyton verrucosum (strain HKI 0517).